The sequence spans 361 residues: Alanine racemase 2 (361 aa).

Lys30 functions as the Proton acceptor; specific for D-alanine in the catalytic mechanism. The residue at position 30 (Lys30) is an N6-(pyridoxal phosphate)lysine. Residue Arg122 participates in substrate binding. Tyr256 functions as the Proton acceptor; specific for L-alanine in the catalytic mechanism. Met303 contacts substrate.

It belongs to the alanine racemase family. Pyridoxal 5'-phosphate serves as cofactor.

It catalyses the reaction L-alanine = D-alanine. It participates in amino-acid biosynthesis; D-alanine biosynthesis; D-alanine from L-alanine: step 1/1. Its function is as follows. Catalyzes the interconversion of L-alanine and D-alanine. May also act on other amino acids. This chain is Alanine racemase 2 (alr2), found in Staphylococcus aureus (strain COL).